The sequence spans 135 residues: Small ribosomal subunit protein uS12c (135 aa).

Belongs to the universal ribosomal protein uS12 family. In terms of assembly, part of the 30S ribosomal subunit.

The protein localises to the plastid. It is found in the chloroplast. Its function is as follows. With S4 and S5 plays an important role in translational accuracy. Located at the interface of the 30S and 50S subunits. The polypeptide is Small ribosomal subunit protein uS12c (rps12) (Adiantum capillus-veneris (Maidenhair fern)).